A 275-amino-acid chain; its full sequence is 3-methyl-2-oxobutanoate hydroxymethyltransferase (275 aa).

2 residues coordinate Mg(2+): Asp44 and Asp83. Residues Asp44–Ser45, Asp83, and Lys113 contribute to the 3-methyl-2-oxobutanoate site. Glu115 contributes to the Mg(2+) binding site. Catalysis depends on Glu182, which acts as the Proton acceptor.

The protein belongs to the PanB family. In terms of assembly, homodecamer; pentamer of dimers. Requires Mg(2+) as cofactor.

Its subcellular location is the cytoplasm. The enzyme catalyses 3-methyl-2-oxobutanoate + (6R)-5,10-methylene-5,6,7,8-tetrahydrofolate + H2O = 2-dehydropantoate + (6S)-5,6,7,8-tetrahydrofolate. Its pathway is cofactor biosynthesis; (R)-pantothenate biosynthesis; (R)-pantoate from 3-methyl-2-oxobutanoate: step 1/2. Catalyzes the reversible reaction in which hydroxymethyl group from 5,10-methylenetetrahydrofolate is transferred onto alpha-ketoisovalerate to form ketopantoate. The polypeptide is 3-methyl-2-oxobutanoate hydroxymethyltransferase (Clostridium beijerinckii (strain ATCC 51743 / NCIMB 8052) (Clostridium acetobutylicum)).